A 64-amino-acid chain; its full sequence is DNA gyrase inhibitor YacG (64 aa).

The Zn(2+) site is built by Cys9, Cys12, Cys28, and Cys32.

The protein belongs to the DNA gyrase inhibitor YacG family. Interacts with GyrB. Zn(2+) is required as a cofactor.

Functionally, inhibits all the catalytic activities of DNA gyrase by preventing its interaction with DNA. Acts by binding directly to the C-terminal domain of GyrB, which probably disrupts DNA binding by the gyrase. The polypeptide is DNA gyrase inhibitor YacG (Enterobacter sp. (strain 638)).